The following is a 404-amino-acid chain: Serine/threonine transporter SstT (404 aa).

Helical transmembrane passes span 17–37 (IGIG…VTAI), 44–64 (FVGA…VQAI), 75–95 (MTLI…VAVI), 138–158 (ALAT…GLAL), 179–199 (IVVW…FSTV), 212–232 (LLIL…NPLL), 287–307 (IPLG…VLTL), 319–339 (FLTA…ASGV), and 354–374 (FGIS…VGVI).

This sequence belongs to the dicarboxylate/amino acid:cation symporter (DAACS) (TC 2.A.23) family.

It is found in the cell membrane. The catalysed reaction is L-serine(in) + Na(+)(in) = L-serine(out) + Na(+)(out). The enzyme catalyses L-threonine(in) + Na(+)(in) = L-threonine(out) + Na(+)(out). In terms of biological role, involved in the import of serine and threonine into the cell, with the concomitant import of sodium (symport system). This chain is Serine/threonine transporter SstT, found in Streptococcus equi subsp. zooepidemicus (strain H70).